The sequence spans 301 residues: Bifunctional dTDP-4-dehydrorhamnose 3,5-epimerase/dTDP-4-dehydrorhamnose reductase (301 aa).

NADPH is bound by residues 23–24 (WI), 69–71 (GVT), and Tyr111.

This sequence belongs to the dTDP-4-dehydrorhamnose reductase family. Expressed in roots, leaves, stems and flowers.

It catalyses the reaction dTDP-4-dehydro-6-deoxy-alpha-D-glucose = dTDP-4-dehydro-beta-L-rhamnose. The enzyme catalyses dTDP-beta-L-rhamnose + NADP(+) = dTDP-4-dehydro-beta-L-rhamnose + NADPH + H(+). It functions in the pathway carbohydrate biosynthesis; dTDP-L-rhamnose biosynthesis. In terms of biological role, bifunctional enzyme involved in dTDP-beta-L-rhamnose biosynthesis. Catalyzes the epimerization of the C3' and C5'positions of dTDP-6-deoxy-4-keto-alpha-D-glucose to form dTDP-4-keto-beta-L-rhamnose and its reduction to yield dTDP-beta-L-rhamnose. Can form UDP-beta-L-rhamnose from UDP-6-deoxy-4-keto-alpha-D-glucose, but cannot convert GDP-4-dehydro-6-deoxy-D-mannose to GDP-fucose. The sequence is that of Bifunctional dTDP-4-dehydrorhamnose 3,5-epimerase/dTDP-4-dehydrorhamnose reductase from Arabidopsis thaliana (Mouse-ear cress).